We begin with the raw amino-acid sequence, 239 residues long: Ras-like protein B (239 aa).

Residues 13-18 (GVGKTA), 29-35 (VETYDPT), 59-60 (AG), 139-142 (NKSD), and 169-171 (SAK) contribute to the GTP site. The Effector region signature appears at 32–40 (YDPTIEDSY). The interval 191–227 (RQQQQGGRAQDRRPTGLGPMRDRDAGPEYPKTFRPDR) is disordered. Basic and acidic residues predominate over residues 199-226 (AQDRRPTGLGPMRDRDAGPEYPKTFRPD).

It belongs to the small GTPase superfamily. Ras family. In terms of assembly, interacts with mpkA.

The enzyme catalyses GTP + H2O = GDP + phosphate + H(+). Its function is as follows. Ras-like protein involved in the activation of Ras protein signal transduction. Ras proteins bind GDP/GTP and possess intrinsic GTPase activity. Plays a role in hyphal morphology and conidiophore development. Required for full virulence. The chain is Ras-like protein B from Aspergillus fumigatus (strain ATCC MYA-4609 / CBS 101355 / FGSC A1100 / Af293) (Neosartorya fumigata).